A 132-amino-acid chain; its full sequence is MSMTDPIADLLVRIKNAAAVGKQTVKLPSSKIKVAIAQVLKDEGYITDLRVTQTENNKAELEIVLKYFEGRPVIETLKRFSRSGLRQYRGKTELPKVLGGLGIAIISTSKGIMTDAQAREAGVGGEVLCFVA.

It belongs to the universal ribosomal protein uS8 family. In terms of assembly, part of the 30S ribosomal subunit. Contacts proteins S5 and S12.

In terms of biological role, one of the primary rRNA binding proteins, it binds directly to 16S rRNA central domain where it helps coordinate assembly of the platform of the 30S subunit. In Xanthomonas euvesicatoria pv. vesicatoria (strain 85-10) (Xanthomonas campestris pv. vesicatoria), this protein is Small ribosomal subunit protein uS8.